The sequence spans 285 residues: NADH-dependent oxidoreductase ucdB (285 aa).

T87 contributes to the NAD(+) binding site. Residue K156 is part of the active site.

Belongs to the HIBADH-related family. NP60 subfamily.

The protein operates within secondary metabolite biosynthesis. Its function is as follows. Nonribosomal peptide synthetase that mediates the biosynthesis of usterphenyllins and uscandidusins, p-terphenyl derivatives. Within the pathway, ucdB alone catalyzes both reduction and dehydration of atromentin to form a terphenyl triol intermediate. The pathway begin with the biosynthesis of 4-hydroxyphenylpyruvate (HPPA) from L-tyrosine, possibly by the aminotransferase ucdG. The nonribosomal peptide synthetase ucdA then condenses two HPPA units to produce atromentin. The key step in this pathway is the reduction and dehydration of atromentin to form a terphenyl triol intermediate, performed by the NAD-dependent dehydrogenase ucdB. Further O-methylation by the methyltransferase ucdC forms terphenyllin carrying two methoxy moieties at C-9 and C-12, and subsequent dihydroxylation at C-3 of ring A and C-15 of ring C by the flavin-dependent oxygenase ucdD leads to 3,15-dihydroxyterphenyllin. Prenylation by ucdE at position C-5 of ring A forms usterphenyllin B, and is followed by a second prenylation at position C-14 of ring C to form usterphenyllin A. The following furan ring formation that leads to uscandidusins A and B was proven to be an unexpected spontaneous non-enzymatic reaction. The polypeptide is NADH-dependent oxidoreductase ucdB (Aspergillus ustus).